Here is a 113-residue protein sequence, read N- to C-terminus: Urotensin-2B (113 aa).

The signal sequence occupies residues 1 to 27 (MKVFSTSLWCGLLTLLSVMNLFKSVRG). Positions 28–103 (RPHLSSGHEL…LDNLSSSHTK (76 aa)) are excised as a propeptide. A disulfide bond links Cys-107 and Cys-112.

The protein belongs to the urotensin-2 family.

The protein localises to the secreted. Functionally, potent vasoconstrictor. The chain is Urotensin-2B (Uts2b) from Mus musculus (Mouse).